A 744-amino-acid polypeptide reads, in one-letter code: Eukaryotic translation initiation factor 3 subunit B (744 aa).

The disordered stretch occupies residues 1-20; sequence MAPSFDHLPDPEEDEYDEEE. Over residues 11-20 the composition is skewed to acidic residues; that stretch reads PEEDEYDEEE. The RRM domain occupies 40-126; the sequence is TFVVIDGLPE…HTLRVNKLTD (87 aa). WD repeat units lie at residues 193-232, 234-290, 307-348, and 577-622; these read DRQH…RQKR, AHPF…PLRS, PVKR…LLDK, and ADHY…LREE. Over residues 699-714 the composition is skewed to basic and acidic residues; the sequence is EREDAGLPRDPLEPLK. Residues 699–722 form a disordered region; the sequence is EREDAGLPRDPLEPLKSKMASGDE.

The protein belongs to the eIF-3 subunit B family. Component of the eukaryotic translation initiation factor 3 (eIF-3) complex.

The protein resides in the cytoplasm. In terms of biological role, RNA-binding component of the eukaryotic translation initiation factor 3 (eIF-3) complex, which is involved in protein synthesis of a specialized repertoire of mRNAs and, together with other initiation factors, stimulates binding of mRNA and methionyl-tRNAi to the 40S ribosome. The eIF-3 complex specifically targets and initiates translation of a subset of mRNAs involved in cell proliferation. This Sclerotinia sclerotiorum (strain ATCC 18683 / 1980 / Ss-1) (White mold) protein is Eukaryotic translation initiation factor 3 subunit B (prt1).